Consider the following 184-residue polypeptide: ATP-dependent 6-phosphofructokinase (184 aa).

The N-terminal catalytic PFK domain 1 stretch occupies residues 1-184; it reads GGDGSLTGAN…TRTTVLGHIQ (184 aa). 2–5 is an ATP binding site; the sequence is GDGS. Aspartate 3 is a binding site for Mg(2+). Substrate-binding positions include 48–50, arginine 85, 92–94, glutamate 148, arginine 176, and 182–184; these read SID, MGR, and HIQ. Catalysis depends on aspartate 50, which acts as the Proton acceptor.

It belongs to the phosphofructokinase type A (PFKA) family. ATP-dependent PFK group I subfamily. Eukaryotic two domain clade 'E' sub-subfamily. As to quaternary structure, homotetramer. Mg(2+) serves as cofactor.

The protein localises to the cytoplasm. It catalyses the reaction beta-D-fructose 6-phosphate + ATP = beta-D-fructose 1,6-bisphosphate + ADP + H(+). The protein operates within carbohydrate degradation; glycolysis; D-glyceraldehyde 3-phosphate and glycerone phosphate from D-glucose: step 3/4. Allosterically activated by ADP, AMP, or fructose 2,6-bisphosphate, and allosterically inhibited by ATP or citrate. In terms of biological role, catalyzes the phosphorylation of D-fructose 6-phosphate to fructose 1,6-bisphosphate by ATP, the first committing step of glycolysis. The polypeptide is ATP-dependent 6-phosphofructokinase (PFK) (Calanus finmarchicus (Calanus tonsus)).